A 307-amino-acid chain; its full sequence is Transposase InsD for insertion element IS2-9 (307 aa).

In terms of domain architecture, Integrase catalytic spans 112 to 295 (KPAVPPSKRA…SPREYLRQRA (184 aa)).

Involved in the transposition of the insertion sequence IS2. This Escherichia coli (strain K12) protein is Transposase InsD for insertion element IS2-9.